The following is a 455-amino-acid chain: Indoleacetamide hydrolase (455 aa).

Active-site charge relay system residues include Lys71 and Ser146. Ser170 functions as the Acyl-ester intermediate in the catalytic mechanism.

Belongs to the amidase family.

The protein operates within plant hormone metabolism; auxin biosynthesis. Hydrolyzes indole-3-acetamide (IAM) into indole-3-acetic acid (IAA). This is Indoleacetamide hydrolase (iaaH) from Pseudomonas savastanoi (Pseudomonas syringae pv. savastanoi).